We begin with the raw amino-acid sequence, 250 residues long: DNA repair protein RecO (250 aa).

The protein belongs to the RecO family.

In terms of biological role, involved in DNA repair and RecF pathway recombination. The protein is DNA repair protein RecO of Staphylococcus aureus (strain COL).